A 512-amino-acid polypeptide reads, in one-letter code: Lysine--tRNA ligase (512 aa).

2 residues coordinate Mg(2+): glutamate 422 and glutamate 429.

Belongs to the class-II aminoacyl-tRNA synthetase family. Homodimer. Mg(2+) serves as cofactor.

The protein localises to the cytoplasm. The enzyme catalyses tRNA(Lys) + L-lysine + ATP = L-lysyl-tRNA(Lys) + AMP + diphosphate. This chain is Lysine--tRNA ligase, found in Paraburkholderia phymatum (strain DSM 17167 / CIP 108236 / LMG 21445 / STM815) (Burkholderia phymatum).